A 62-amino-acid polypeptide reads, in one-letter code: Photosystem II reaction center protein Z (62 aa).

Transmembrane regions (helical) follow at residues 8–28 (AVFALIAISFLLVIGVPVVLA) and 41–61 (FSGASLWIGLVFLVGILNSFI).

The protein belongs to the PsbZ family. As to quaternary structure, PSII is composed of 1 copy each of membrane proteins PsbA, PsbB, PsbC, PsbD, PsbE, PsbF, PsbH, PsbI, PsbJ, PsbK, PsbL, PsbM, PsbT, PsbY, PsbZ, Psb30/Ycf12, at least 3 peripheral proteins of the oxygen-evolving complex and a large number of cofactors. It forms dimeric complexes.

Its subcellular location is the plastid. The protein resides in the chloroplast thylakoid membrane. Functionally, may control the interaction of photosystem II (PSII) cores with the light-harvesting antenna, regulates electron flow through the 2 photosystem reaction centers. PSII is a light-driven water plastoquinone oxidoreductase, using light energy to abstract electrons from H(2)O, generating a proton gradient subsequently used for ATP formation. This chain is Photosystem II reaction center protein Z, found in Marchantia polymorpha (Common liverwort).